The following is a 468-amino-acid chain: Ribulose bisphosphate carboxylase large chain (468 aa).

An N6,N6,N6-trimethyllysine modification is found at K7. The substrate site is built by N116 and T166. K168 serves as the catalytic Proton acceptor. K170 is a binding site for substrate. 3 residues coordinate Mg(2+): K194, D196, and E197. At K194 the chain carries N6-carboxylysine. The active-site Proton acceptor is H287. Substrate-binding residues include R288, H320, and S372.

It belongs to the RuBisCO large chain family. Type I subfamily. In terms of assembly, heterohexadecamer of 8 large chains and 8 small chains. It depends on Mg(2+) as a cofactor.

It localises to the plastid. Its subcellular location is the chloroplast. The catalysed reaction is 2 (2R)-3-phosphoglycerate + 2 H(+) = D-ribulose 1,5-bisphosphate + CO2 + H2O. It carries out the reaction D-ribulose 1,5-bisphosphate + O2 = 2-phosphoglycolate + (2R)-3-phosphoglycerate + 2 H(+). In terms of biological role, ruBisCO catalyzes two reactions: the carboxylation of D-ribulose 1,5-bisphosphate, the primary event in carbon dioxide fixation, as well as the oxidative fragmentation of the pentose substrate in the photorespiration process. Both reactions occur simultaneously and in competition at the same active site. This chain is Ribulose bisphosphate carboxylase large chain, found in Couroupita guianensis (Cannonball tree).